The sequence spans 397 residues: Succinate--CoA ligase [ADP-forming] subunit beta (397 aa).

The ATP-grasp domain occupies 9–254; the sequence is KALLKSFGAP…ETEQDAKELE (246 aa). ATP-binding positions include K46, 53–55, E109, A112, and E117; that span reads GRG. Positions 209 and 223 each coordinate Mg(2+). Substrate is bound by residues N274 and 331-333; that span reads GIM.

Belongs to the succinate/malate CoA ligase beta subunit family. In terms of assembly, heterotetramer of two alpha and two beta subunits. It depends on Mg(2+) as a cofactor.

The catalysed reaction is succinate + ATP + CoA = succinyl-CoA + ADP + phosphate. It catalyses the reaction GTP + succinate + CoA = succinyl-CoA + GDP + phosphate. Its pathway is carbohydrate metabolism; tricarboxylic acid cycle; succinate from succinyl-CoA (ligase route): step 1/1. Functionally, succinyl-CoA synthetase functions in the citric acid cycle (TCA), coupling the hydrolysis of succinyl-CoA to the synthesis of either ATP or GTP and thus represents the only step of substrate-level phosphorylation in the TCA. The beta subunit provides nucleotide specificity of the enzyme and binds the substrate succinate, while the binding sites for coenzyme A and phosphate are found in the alpha subunit. In Hyphomonas neptunium (strain ATCC 15444), this protein is Succinate--CoA ligase [ADP-forming] subunit beta.